We begin with the raw amino-acid sequence, 315 residues long: Small ribosomal subunit protein uS2 (315 aa).

The disordered stretch occupies residues 241 to 315 (AQHGEERRPG…QPAPGSDANR (75 aa)). Residues 243–288 (HGEERRPGEEDRDAASERGQKDRRDRRDRRGGGRDRERREPREDRA) show a composition bias toward basic and acidic residues.

Belongs to the universal ribosomal protein uS2 family.

The chain is Small ribosomal subunit protein uS2 from Anaeromyxobacter sp. (strain Fw109-5).